The sequence spans 259 residues: DNA adenine methylase (259 aa).

Residues Tyr7, Lys11, 32–37 (FCGGLS), Asp50, 156–157 (HF), Asp171, and Tyr181 each bind S-adenosyl-L-methionine.

The protein belongs to the N(4)/N(6)-methyltransferase family. In terms of assembly, monomer.

It catalyses the reaction a 2'-deoxyadenosine in DNA + S-adenosyl-L-methionine = an N(6)-methyl-2'-deoxyadenosine in DNA + S-adenosyl-L-homocysteine + H(+). An alpha subtype methylase, recognizes the double-stranded sequence 5'-GATC-3' and methylates A-2. Also acts on 5-hydroxymethylcytosine (hmC)-containing DNA, the normal base in this virus. May prevent degradation of viral DNA by the host restriction-modification antiviral defense system. In Enterobacteria phage T4 (Bacteriophage T4), this protein is DNA adenine methylase.